Consider the following 925-residue polypeptide: Alanine--tRNA ligase (925 aa).

H611, H615, C714, and H718 together coordinate Zn(2+).

It belongs to the class-II aminoacyl-tRNA synthetase family. It depends on Zn(2+) as a cofactor.

The protein resides in the cytoplasm. The catalysed reaction is tRNA(Ala) + L-alanine + ATP = L-alanyl-tRNA(Ala) + AMP + diphosphate. Its function is as follows. Catalyzes the attachment of alanine to tRNA(Ala) in a two-step reaction: alanine is first activated by ATP to form Ala-AMP and then transferred to the acceptor end of tRNA(Ala). Also edits incorrectly charged Ser-tRNA(Ala) and Gly-tRNA(Ala) via its editing domain. The polypeptide is Alanine--tRNA ligase (Methanosarcina acetivorans (strain ATCC 35395 / DSM 2834 / JCM 12185 / C2A)).